We begin with the raw amino-acid sequence, 190 residues long: Vacuolar protein sorting-associated protein 29 (190 aa).

It belongs to the VPS29 family. In terms of assembly, component of the retromer complex which consists of VPS29 (MAG1), VPS26 (VPS26A or VPS26B), VPS35 (VPS35A or VPS35B or VPS35C), VPS5/17 (SNX1 or SNX2A or SNX2B). Component of a retromer subcomplex consisting of VPS29 (MAG1), VPS26 (VPS26A or VPS26B), VPS35 (VPS35A or VPS35B or VPS35C).

It localises to the cytoplasm. It is found in the endosome membrane. The protein localises to the prevacuolar compartment membrane. Its subcellular location is the golgi apparatus. The protein resides in the trans-Golgi network membrane. It localises to the late endosome membrane. Its function is as follows. Plays a role in vesicular protein sorting. Component of the membrane-associated retromer complex which is essential in endosome-to-Golgi retrograde transport. Required for the auxin-carrier protein PIN2 sorting to the lytic vacuolar pathway and the PIN1 recycling to the plasma membrane, thus influencing auxin transport orientation. Also involved in the efficient sorting of seed storage proteins globulin 12S and albumin 2S. The VPS29-VPS26-VPS35 subcomplex may be involved in recycling of specific cargos from endosome to the plasma membrane. The polypeptide is Vacuolar protein sorting-associated protein 29 (Arabidopsis thaliana (Mouse-ear cress)).